Consider the following 147-residue polypeptide: MRVVLLASAVLCLLAGQVLSICSPVDYTLYVEKPECDFCVAINTTICMGFCYSLDPNVVGPAVKRLVVQRGCTYQAVEYRTAELPGCPPHVDPRFSYPVALHCTCRACDPARDECTHRASADGDRCSKPLLLHMHAYPGQSNYIQTL.

The N-terminal stretch at 1 to 20 (MRVVLLASAVLCLLAGQVLS) is a signal peptide. 6 disulfides stabilise this stretch: Cys-22/Cys-72, Cys-36/Cys-87, Cys-39/Cys-126, Cys-47/Cys-103, Cys-51/Cys-105, and Cys-108/Cys-115. The N-linked (GlcNAc...) asparagine glycan is linked to Asn-43.

This sequence belongs to the glycoprotein hormones subunit beta family. In terms of assembly, heterodimer of a common alpha chain and a unique beta chain which confers biological specificity to thyrotropin, lutropin, follitropin and gonadotropin.

It is found in the secreted. Indispensable for the control of thyroid structure and metabolism. May play some role in the biological processes of the immature fishes. This chain is Thyrotropin subunit beta (tshb), found in Anguilla anguilla (European freshwater eel).